We begin with the raw amino-acid sequence, 280 residues long: Fructose-1,6-bisphosphatase class 1 (280 aa).

Mg(2+) contacts are provided by Glu-64, Asp-83, Leu-85, and Asp-86. Residues 86–89 (DGSS), Tyr-189, and Lys-220 each bind substrate. Glu-226 serves as a coordination point for Mg(2+).

Belongs to the FBPase class 1 family. As to quaternary structure, homotetramer. Mg(2+) is required as a cofactor.

Its subcellular location is the cytoplasm. It catalyses the reaction beta-D-fructose 1,6-bisphosphate + H2O = beta-D-fructose 6-phosphate + phosphate. It functions in the pathway carbohydrate biosynthesis; gluconeogenesis. This is Fructose-1,6-bisphosphatase class 1 from Campylobacter jejuni subsp. jejuni serotype O:6 (strain 81116 / NCTC 11828).